We begin with the raw amino-acid sequence, 205 residues long: Small ribosomal subunit protein uS5 (205 aa).

In terms of domain architecture, S5 DRBM spans 49–112 (LVDEVLCIDM…TNAKLNIVKV (64 aa)).

This sequence belongs to the universal ribosomal protein uS5 family. As to quaternary structure, part of the 30S ribosomal subunit. Contacts protein S4.

With S4 and S12 plays an important role in translational accuracy. The polypeptide is Small ribosomal subunit protein uS5 (Methanocorpusculum labreanum (strain ATCC 43576 / DSM 4855 / Z)).